The sequence spans 170 residues: MSSNKIVLTSSDDESFEVEEAVARKLKVIAHMIDDDCADKAIPLENVTGNILALVIEYCKKHVLDDVDDSDDSTEATSENVNEEAKNELRTWDAEFMKEFDMETVMKLILAVNYLNVQDLLGLTCQTVADHMKDMSPEEVRELFNIENDYTPEEEDAIRKENAWAFEDLK.

The segment at 109 to 167 (ILAVNYLNVQDLLGLTCQTVADHMKDMSPEEVRELFNIENDYTPEEEDAIRKENAWAFE) is interaction with the F-box domain of F-box proteins.

It belongs to the SKP1 family. In terms of assembly, part of a SCF (SKP1-cullin-F-box) protein ligase complex. Interacts with CPR1/CPR30, At3g61590 and At4g11590. As to expression, mainly detected in the siliques.

The protein localises to the nucleus. It participates in protein modification; protein ubiquitination. Its function is as follows. Involved in ubiquitination and subsequent proteasomal degradation of target proteins. Together with CUL1, RBX1 and a F-box protein, it forms a SCF E3 ubiquitin ligase complex. The functional specificity of this complex depends on the type of F-box protein. In the SCF complex, it serves as an adapter that links the F-box protein to CUL1. This Arabidopsis thaliana (Mouse-ear cress) protein is SKP1-like protein 16 (ASK16).